A 201-amino-acid chain; its full sequence is MGLVTSILGRREYRLLQNSVTKKHLCKFMGVEFDYNDLDEITEIRVGENIFDTFESYARFAMKDTMKSIFAECKAMKTCLARIEREKQTEASMNHKIRQCYITLRRLCQLYYKFYQDLEKLKIPEHAWNVPLVKKAEKSIVVLDHAIYKFKAKGNLDVKKFREEVSHQYNIIEEVLKQFKSMDEGEYVEMRMKEEMKTEEA.

This is an uncharacterized protein from Caenorhabditis elegans.